Here is a 295-residue protein sequence, read N- to C-terminus: Putative F-box protein At5g44220 (295 aa).

Residues 56 to 102 (STNSDLLPMDLIKEILKRLPAKTLARFLCVSKLWSSIIRSRDLMKLF) enclose the F-box domain.

The polypeptide is Putative F-box protein At5g44220 (Arabidopsis thaliana (Mouse-ear cress)).